We begin with the raw amino-acid sequence, 1171 residues long: Stress response protein nst1 (1171 aa).

Polar residues-rich tracts occupy residues Met1–Ala29 and Lys37–Ile68. Disordered stretches follow at residues Met1–Glu238, Tyr307–Thr392, Arg433–Glu510, Glu545–Gln739, Pro863–Asp996, and Phe1139–Phe1171. Residues Asn76–Gln86 show a composition bias toward basic residues. Residues Ala87–Gln96 show a composition bias toward low complexity. Residues Asp108 to Gly124 are compositionally biased toward basic and acidic residues. Residues Leu125 to Asp150 show a composition bias toward acidic residues. Residues Gly160–Asn172 are compositionally biased toward polar residues. Residues Lys176 to Lys185 are compositionally biased toward basic residues. A compositionally biased stretch (polar residues) spans Asp190–His206. Positions Ser226 to Glu238 are enriched in basic and acidic residues. Pro residues predominate over residues Gly315–Arg324. Residues Leu356–Glu384 are compositionally biased toward acidic residues. A compositionally biased stretch (basic and acidic residues) spans Arg433–Glu442. The span at Pro472 to Thr503 shows a compositional bias: acidic residues. Residues Glu474 to Ala733 adopt a coiled-coil conformation. Residues Glu545–Val717 show a composition bias toward basic and acidic residues. Residues Ala718–Ser734 are compositionally biased toward low complexity. Residues His865–Ser874 are compositionally biased toward pro residues. Residues Gln895–Gln915 are compositionally biased toward polar residues.

Belongs to the NST1 family.

It localises to the cytoplasm. Functionally, may act as a negative regulator of salt tolerance. This Sclerotinia sclerotiorum (strain ATCC 18683 / 1980 / Ss-1) (White mold) protein is Stress response protein nst1 (nst1).